An 87-amino-acid chain; its full sequence is Toxin CsEv2 (87 aa).

The N-terminal stretch at 1–19 (MNSLLIITACLFLIGTVWA) is a signal peptide. The LCN-type CS-alpha/beta domain occupies 20–85 (KEGYLVNKST…TYPLPNKSCS (66 aa)). 4 disulfide bridges follow: C31–C84, C35–C60, C44–C65, and C48–C67.

Belongs to the long (4 C-C) scorpion toxin superfamily. Sodium channel inhibitor family. Beta subfamily. In terms of tissue distribution, expressed by the venom gland.

It localises to the secreted. Functionally, beta toxins bind voltage-independently at site-4 of sodium channels (Nav) and shift the voltage of activation toward more negative potentials thereby affecting sodium channel activation and promoting spontaneous and repetitive firing. Induces immediate paralysis in crickets after injection, with a total paralysis occurring within 15-30 minutes and lasting for 1-2 hours. Is also lethal to vertebrate (chicks) when injected in very high dosages (more that 100 mg/kg). In Centruroides sculpturatus (Arizona bark scorpion), this protein is Toxin CsEv2.